Here is a 136-residue protein sequence, read N- to C-terminus: Large ribosomal subunit protein uL16 (136 aa).

This sequence belongs to the universal ribosomal protein uL16 family. As to quaternary structure, part of the 50S ribosomal subunit.

Its function is as follows. Binds 23S rRNA and is also seen to make contacts with the A and possibly P site tRNAs. The polypeptide is Large ribosomal subunit protein uL16 (Shewanella baltica (strain OS155 / ATCC BAA-1091)).